A 497-amino-acid polypeptide reads, in one-letter code: ADP-dependent glucokinase (497 aa).

Positions methionine 1–leucine 22 are cleaved as a signal peptide. Residues serine 52–tyrosine 497 form the ADPK domain. Residues glutamate 297, glutamate 328, and aspartate 481 each coordinate Mg(2+). Catalysis depends on aspartate 481, which acts as the Proton acceptor.

It belongs to the ADP-dependent glucokinase family. Monomer. The cofactor is Mg(2+).

The protein localises to the secreted. It carries out the reaction D-glucose + ADP = D-glucose 6-phosphate + AMP + H(+). It participates in carbohydrate degradation; glycolysis. Its function is as follows. Catalyzes the phosphorylation of D-glucose to D-glucose 6-phosphate using ADP as the phosphate donor. GDP and CDP can replace ADP, but with reduced efficiency. This chain is ADP-dependent glucokinase (ADPGK), found in Homo sapiens (Human).